The chain runs to 388 residues: Succinate--CoA ligase [ADP-forming] subunit beta (388 aa).

The ATP-grasp domain maps to 9-244 (KQLFARYGLP…QSQEDPREAQ (236 aa)). ATP is bound by residues Lys-46, 53 to 55 (GRG), Glu-99, Thr-102, and Glu-107. Asn-199 and Asp-213 together coordinate Mg(2+). Substrate is bound by residues Asn-264 and 321-323 (GIV).

Belongs to the succinate/malate CoA ligase beta subunit family. Heterotetramer of two alpha and two beta subunits. It depends on Mg(2+) as a cofactor.

The enzyme catalyses succinate + ATP + CoA = succinyl-CoA + ADP + phosphate. It catalyses the reaction GTP + succinate + CoA = succinyl-CoA + GDP + phosphate. It participates in carbohydrate metabolism; tricarboxylic acid cycle; succinate from succinyl-CoA (ligase route): step 1/1. In terms of biological role, succinyl-CoA synthetase functions in the citric acid cycle (TCA), coupling the hydrolysis of succinyl-CoA to the synthesis of either ATP or GTP and thus represents the only step of substrate-level phosphorylation in the TCA. The beta subunit provides nucleotide specificity of the enzyme and binds the substrate succinate, while the binding sites for coenzyme A and phosphate are found in the alpha subunit. The chain is Succinate--CoA ligase [ADP-forming] subunit beta from Salmonella dublin (strain CT_02021853).